Here is a 141-residue protein sequence, read N- to C-terminus: Large ribosomal subunit protein uL11 (141 aa).

It belongs to the universal ribosomal protein uL11 family. Part of the ribosomal stalk of the 50S ribosomal subunit. Interacts with L10 and the large rRNA to form the base of the stalk. L10 forms an elongated spine to which L12 dimers bind in a sequential fashion forming a multimeric L10(L12)X complex. In terms of processing, one or more lysine residues are methylated.

In terms of biological role, forms part of the ribosomal stalk which helps the ribosome interact with GTP-bound translation factors. In Desulfotalea psychrophila (strain LSv54 / DSM 12343), this protein is Large ribosomal subunit protein uL11.